Consider the following 547-residue polypeptide: Glucose-6-phosphate isomerase 2 (547 aa).

Catalysis depends on E351, which acts as the Proton donor. Residues H382 and K508 contribute to the active site.

The protein belongs to the GPI family.

It is found in the cytoplasm. The catalysed reaction is alpha-D-glucose 6-phosphate = beta-D-fructose 6-phosphate. It participates in carbohydrate biosynthesis; gluconeogenesis. It functions in the pathway carbohydrate degradation; glycolysis; D-glyceraldehyde 3-phosphate and glycerone phosphate from D-glucose: step 2/4. Catalyzes the reversible isomerization of glucose-6-phosphate to fructose-6-phosphate. This chain is Glucose-6-phosphate isomerase 2, found in Neisseria gonorrhoeae (strain ATCC 700825 / FA 1090).